Reading from the N-terminus, the 280-residue chain is Ribosomal RNA-processing protein 7 homolog A (280 aa).

In terms of domain architecture, RRM spans Arg59 to Tyr159. Residue Ser99 is modified to Phosphoserine.

It belongs to the RRP7 family. As to quaternary structure, part of the small subunit (SSU) processome, composed of more than 70 proteins and the RNA chaperone small nucleolar RNA (snoRNA) U3. Interacts with NOL6; required for NOL6 localization to nucleolus.

It is found in the nucleus. It localises to the nucleolus. The protein localises to the cell projection. Its subcellular location is the cilium. The protein resides in the cytoplasm. It is found in the cytoskeleton. It localises to the microtubule organizing center. The protein localises to the centrosome. Nucleolar protein that is involved in ribosomal RNA (rRNA) processing. Also plays a role in primary cilia resorption, and cell cycle progression in neurogenesis and neocortex development. Part of the small subunit (SSU) processome, first precursor of the small eukaryotic ribosomal subunit. During the assembly of the SSU processome in the nucleolus, many ribosome biogenesis factors, an RNA chaperone and ribosomal proteins associate with the nascent pre-rRNA and work in concert to generate RNA folding, modifications, rearrangements and cleavage as well as targeted degradation of pre-ribosomal RNA by the RNA exosome. The protein is Ribosomal RNA-processing protein 7 homolog A (RRP7A) of Pongo abelii (Sumatran orangutan).